Consider the following 557-residue polypeptide: Ubiquitin C-terminal hydrolase 22 (557 aa).

A UBP-type; degenerate zinc finger spans residues 36–130 (FRCFNDARIK…VSKQLFGLGM (95 aa)). Zn(2+) is bound by residues Cys56, Cys59, Cys69, Cys72, Cys77, His80, His84, and His91. The USP domain maps to 177–531 (RGLNNLGSTC…ECYMLFYAQE (355 aa)). Cys186 (nucleophile) is an active-site residue. His491 functions as the Proton acceptor in the catalytic mechanism.

It belongs to the peptidase C19 family. As to quaternary structure, component of a deubiquitination module (DUB module) formed by ENY2, SGF11, and UBP22 in Arabidopsis. Interacts directly with SGF11, but not with ENY2.

The protein resides in the nucleus. It localises to the nucleoplasm. It carries out the reaction Thiol-dependent hydrolysis of ester, thioester, amide, peptide and isopeptide bonds formed by the C-terminal Gly of ubiquitin (a 76-residue protein attached to proteins as an intracellular targeting signal).. Its function is as follows. Component of a deubiquitination module (DUB module) that specifically deubiquinates monoubiquinated histone H2B (H2Bub). Does not seem to be a component of the TREX-2 complex. Seems to act independently of the SAGA multiprotein complex. The DUB module is responsible for the major H2Bub deubiquitinase activity in Arabidopsis. In Arabidopsis thaliana (Mouse-ear cress), this protein is Ubiquitin C-terminal hydrolase 22.